Here is a 38-residue protein sequence, read N- to C-terminus: Large ribosomal subunit protein bL36A (38 aa).

The protein belongs to the bacterial ribosomal protein bL36 family.

The sequence is that of Large ribosomal subunit protein bL36A from Cronobacter sakazakii (strain ATCC BAA-894) (Enterobacter sakazakii).